A 136-amino-acid chain; its full sequence is Probable S-adenosyl-L-methionine-binding protein PH1056 (136 aa).

The TsaA-like domain occupies 8–126 (IVPVGYIRKE…FPERYDCPKE (119 aa)). S-adenosyl-L-methionine contacts are provided by residues 48-49 (HK), arginine 78, and 106-109 (EDGT).

This sequence belongs to the tRNA methyltransferase O family.

This Pyrococcus horikoshii (strain ATCC 700860 / DSM 12428 / JCM 9974 / NBRC 100139 / OT-3) protein is Probable S-adenosyl-L-methionine-binding protein PH1056.